The primary structure comprises 521 residues: Cyclic AMP-responsive element-binding protein 3-like protein 2 (521 aa).

The Cytoplasmic segment spans residues 1-378; it reads MEVLESGEQS…CKLAGTQTGT (378 aa). S93 carries the phosphoserine modification. Residue K178 forms a Glycyl lysine isopeptide (Lys-Gly) (interchain with G-Cter in SUMO2) linkage. S191 carries the post-translational modification Phosphoserine. Positions 196–264 are disordered; it reads SVDQLHLPPT…PHKLQGSGPL (69 aa). The segment covering 208 to 220 has biased composition (low complexity); that stretch reads SSHSSDSEGSLSP. Positions 294–357 constitute a bZIP domain; the sequence is ALKKIRRKIK…RTLLQQLQKL (64 aa). A basic motif region spans residues 296 to 325; the sequence is KKIRRKIKNKISAQESRRKKKEYMDSLEKK. The segment at 336-357 is leucine-zipper; sequence LRKKVEVLENTNRTLLQQLQKL. Residues 379–399 form a helical; Signal-anchor for type II membrane protein membrane-spanning segment; sequence CLMVVVLCFAVAFGSLFQGYG. Residues 400–521 lie on the Lumenal side of the membrane; that stretch reads LYPSATKMAL…ELERRVNATF (122 aa). Positions 427–430 match the S1P recognition motif; it reads RNLL. Residues N505 and N518 are each glycosylated (N-linked (GlcNAc...) asparagine).

It belongs to the bZIP family. ATF subfamily. In terms of assembly, binds DNA as a dimer. Upon ER stress, translocated to the Golgi apparatus, where it is processed by regulated intramembrane proteolysis (RIP) to release the cytosol-facing N-terminal transcription factor domain. The cleavage is performed sequentially by site-1 and site-2 proteases (S1P/MBTPS1 and S2P/MBTPS2). Post-translationally, N-glycosylated. In terms of processing, ubiquitinated by HRD1/SYVN1; undergoes 'Lys-48'-linked ubiquitination, followed by rapid proteasomal degradation under normal conditions. Upon ER stress, SYVN1 E3 ubiquitin-protein ligase dissociates from its substrate, ubiquitination does not occur and CREB3L2 is stabilized.

Its subcellular location is the endoplasmic reticulum membrane. The protein localises to the nucleus. Its function is as follows. Transcription factor involved in unfolded protein response (UPR). In the absence of endoplasmic reticulum (ER) stress, inserted into ER membranes, with N-terminal DNA-binding and transcription activation domains oriented toward the cytosolic face of the membrane. In response to ER stress, transported to the Golgi, where it is cleaved in a site-specific manner by resident proteases S1P/MBTPS1 and S2P/MBTPS2. The released N-terminal cytosolic domain is translocated to the nucleus to effect transcription of specific target genes. Plays a critical role in chondrogenesis by activating the transcription of SEC23A, which promotes the transport and secretion of cartilage matrix proteins, and possibly that of ER biogenesis-related genes. In a neuroblastoma cell line, protects cells from ER stress-induced death. In vitro activates transcription of target genes via direct binding to the CRE site. This Rattus norvegicus (Rat) protein is Cyclic AMP-responsive element-binding protein 3-like protein 2 (Creb3l2).